The primary structure comprises 197 residues: HTH-type transcriptional regulator BetI (197 aa).

The 61-residue stretch at 8–68 folds into the HTH tetR-type domain; that stretch reads PIRRQQLIEA…ATMRYLMNAL (61 aa). The H-T-H motif DNA-binding region spans 31-50; that stretch reads SIALIARLAGVSNGIISHYF.

It functions in the pathway amine and polyamine biosynthesis; betaine biosynthesis via choline pathway [regulation]. Functionally, repressor involved in the biosynthesis of the osmoprotectant glycine betaine. It represses transcription of the choline transporter BetT and the genes of BetAB involved in the synthesis of glycine betaine. The sequence is that of HTH-type transcriptional regulator BetI from Pseudomonas fluorescens (strain SBW25).